A 227-amino-acid polypeptide reads, in one-letter code: Phosphoribosylformylglycinamidine synthase subunit PurQ (227 aa).

Residues 2-226 (KFAVIQFPGS…VKAWKEEQVN (225 aa)) enclose the Glutamine amidotransferase type-1 domain. C86 serves as the catalytic Nucleophile. Catalysis depends on residues H195 and E197.

As to quaternary structure, part of the FGAM synthase complex composed of 1 PurL, 1 PurQ and 2 PurS subunits.

The protein resides in the cytoplasm. It catalyses the reaction N(2)-formyl-N(1)-(5-phospho-beta-D-ribosyl)glycinamide + L-glutamine + ATP + H2O = 2-formamido-N(1)-(5-O-phospho-beta-D-ribosyl)acetamidine + L-glutamate + ADP + phosphate + H(+). The enzyme catalyses L-glutamine + H2O = L-glutamate + NH4(+). It functions in the pathway purine metabolism; IMP biosynthesis via de novo pathway; 5-amino-1-(5-phospho-D-ribosyl)imidazole from N(2)-formyl-N(1)-(5-phospho-D-ribosyl)glycinamide: step 1/2. Its function is as follows. Part of the phosphoribosylformylglycinamidine synthase complex involved in the purines biosynthetic pathway. Catalyzes the ATP-dependent conversion of formylglycinamide ribonucleotide (FGAR) and glutamine to yield formylglycinamidine ribonucleotide (FGAM) and glutamate. The FGAM synthase complex is composed of three subunits. PurQ produces an ammonia molecule by converting glutamine to glutamate. PurL transfers the ammonia molecule to FGAR to form FGAM in an ATP-dependent manner. PurS interacts with PurQ and PurL and is thought to assist in the transfer of the ammonia molecule from PurQ to PurL. In Listeria monocytogenes serovar 1/2a (strain ATCC BAA-679 / EGD-e), this protein is Phosphoribosylformylglycinamidine synthase subunit PurQ.